A 699-amino-acid chain; its full sequence is Polyribonucleotide nucleotidyltransferase (699 aa).

The Mg(2+) site is built by Asp493 and Asp499. The region spanning 560–620 (PLIANIEIDP…NKVNQAIEYI (61 aa)) is the KH domain. Residues 630-697 (GDMFEGKITR…DSGRIQLGKA (68 aa)) enclose the S1 motif domain.

It belongs to the polyribonucleotide nucleotidyltransferase family. The cofactor is Mg(2+).

It localises to the cytoplasm. It carries out the reaction RNA(n+1) + phosphate = RNA(n) + a ribonucleoside 5'-diphosphate. In terms of biological role, involved in mRNA degradation. Catalyzes the phosphorolysis of single-stranded polyribonucleotides processively in the 3'- to 5'-direction. The protein is Polyribonucleotide nucleotidyltransferase of Thermosipho melanesiensis (strain DSM 12029 / CIP 104789 / BI429).